A 1179-amino-acid polypeptide reads, in one-letter code: Pesticidal crystal protein Cry1Ad (1179 aa).

It belongs to the delta endotoxin family.

Functionally, promotes colloidosmotic lysis by binding to the midgut epithelial cells of many lepidopteran larvae. The chain is Pesticidal crystal protein Cry1Ad (cry1Ad) from Bacillus thuringiensis subsp. aizawai.